A 589-amino-acid chain; its full sequence is ABC transporter G family member 8 (589 aa).

The ABC transporter domain occupies 16 to 261 (LTTSSISYTI…LLFKGFTVPP (246 aa)). 62-69 (GPSGAGKS) contacts ATP. An ABC transmembrane type-2 domain is found at 311–521 (TEISLLARRF…ALDALLINEY (211 aa)). Helical transmembrane passes span 335–355 (ALEA…IGIG), 365–385 (MFAF…PIFI), 412–432 (VFLP…YFLI), 441–461 (FGYF…FVLF), 470–490 (ITGT…SGYF), 499–519 (YWLF…LLIN), and 560–580 (FNVY…FLAL).

It belongs to the ABC transporter superfamily. ABCG family. Eye pigment precursor importer (TC 3.A.1.204) subfamily.

The protein resides in the membrane. The polypeptide is ABC transporter G family member 8 (ABCG8) (Arabidopsis thaliana (Mouse-ear cress)).